A 509-amino-acid chain; its full sequence is Maturase K (509 aa).

The protein belongs to the intron maturase 2 family. MatK subfamily.

It is found in the plastid. Its subcellular location is the chloroplast. Its function is as follows. Usually encoded in the trnK tRNA gene intron. Probably assists in splicing its own and other chloroplast group II introns. This chain is Maturase K, found in Jacaranda mimosifolia (Jacaranda).